A 230-amino-acid polypeptide reads, in one-letter code: MDPAMPLQLWNLPLLLVGSVLGLTSVSAQGNNLEICLLPLDAGPCQALIPKFYYDRDQQKCRRFNYGGCLGNANNFHSRDLCQQTCGSIEKVPPVCRSELKTYPCDKPNIRFFFNLNTMTCEPLRPGLCSRTINVFSEEATCKGLCEPRKHIPSFCSSPKDEGLCSANVTRFYFNSRNKTCETFTYTGCGGNENNFYYLDACHRACVKGWKKPKRWKIGDFLPRFWKHLS.

The N-terminal stretch at 1 to 22 (MDPAMPLQLWNLPLLLVGSVLG) is a signal peptide. BPTI/Kunitz inhibitor domains lie at 36–86 (CLLP…QQTC), 96–146 (CRSE…KGLC), and 156–206 (CSSP…HRAC). Disulfide bonds link cysteine 36–cysteine 86, cysteine 45–cysteine 69, cysteine 61–cysteine 82, cysteine 96–cysteine 146, cysteine 105–cysteine 129, cysteine 121–cysteine 142, cysteine 156–cysteine 206, cysteine 165–cysteine 189, and cysteine 181–cysteine 202. 2 N-linked (GlcNAc...) asparagine glycosylation sites follow: asparagine 168 and asparagine 178.

Finds in a complex with ABCB1, TFPI2 and PPP2R3C; leading to the dephosphorylation of ABCB1. Highly expressed in placenta. Also expressed in liver and kidney.

The protein localises to the secreted. Functionally, may play a role in the regulation of plasmin-mediated matrix remodeling. Inhibits trypsin, plasmin, factor VIIa/tissue factor and weakly factor Xa. Has no effect on thrombin. This chain is Tissue factor pathway inhibitor 2 (Tfpi2), found in Mus musculus (Mouse).